Here is a 578-residue protein sequence, read N- to C-terminus: Probable multidrug ABC transporter ATP-binding protein YbhF (578 aa).

2 ABC transporter domains span residues 6–237 and 330–559; these read ITLN…LMTS and IEAK…PDPT. ATP is bound by residues 40 to 47 and 362 to 369; these read GPDGAGKT and GPNGAGKS.

The protein belongs to the ABC transporter superfamily. The complex is probably composed of two ATP-binding proteins (YbhF) and two transmembrane proteins (YbhR and YbhS).

In terms of biological role, part of the ABC transporter complex YbhFSR that could be involved in efflux of cefoperazone. Probably responsible for energy coupling to the transport system. The chain is Probable multidrug ABC transporter ATP-binding protein YbhF (ybhF) from Escherichia coli (strain K12).